Reading from the N-terminus, the 689-residue chain is DNA ligase (689 aa).

NAD(+) contacts are provided by residues 58-62 (DQEYD), 107-108 (SL), and Glu138. Lys140 (N6-AMP-lysine intermediate) is an active-site residue. Arg161, Glu198, Lys314, and Lys338 together coordinate NAD(+). Zn(2+)-binding residues include Cys432, Cys435, Cys448, and Cys453. The BRCT domain occupies 611-689 (ASSGTLSGKT…QELLEMLHGG (79 aa)).

Belongs to the NAD-dependent DNA ligase family. LigA subfamily. Requires Mg(2+) as cofactor. Mn(2+) is required as a cofactor.

It catalyses the reaction NAD(+) + (deoxyribonucleotide)n-3'-hydroxyl + 5'-phospho-(deoxyribonucleotide)m = (deoxyribonucleotide)n+m + AMP + beta-nicotinamide D-nucleotide.. In terms of biological role, DNA ligase that catalyzes the formation of phosphodiester linkages between 5'-phosphoryl and 3'-hydroxyl groups in double-stranded DNA using NAD as a coenzyme and as the energy source for the reaction. It is essential for DNA replication and repair of damaged DNA. This Methylacidiphilum infernorum (isolate V4) (Methylokorus infernorum (strain V4)) protein is DNA ligase.